A 471-amino-acid polypeptide reads, in one-letter code: Glutamate--tRNA ligase (471 aa).

Positions 9 to 19 match the 'HIGH' region motif; it reads PSPTGYLHVGG. Positions 98, 100, 125, and 127 each coordinate Zn(2+). The short motif at 237 to 241 is the 'KMSKS' region element; that stretch reads KLSKR. K240 contributes to the ATP binding site.

This sequence belongs to the class-I aminoacyl-tRNA synthetase family. Glutamate--tRNA ligase type 1 subfamily. As to quaternary structure, monomer. Zn(2+) serves as cofactor.

It localises to the cytoplasm. It catalyses the reaction tRNA(Glu) + L-glutamate + ATP = L-glutamyl-tRNA(Glu) + AMP + diphosphate. Its function is as follows. Catalyzes the attachment of glutamate to tRNA(Glu) in a two-step reaction: glutamate is first activated by ATP to form Glu-AMP and then transferred to the acceptor end of tRNA(Glu). The polypeptide is Glutamate--tRNA ligase (Yersinia pseudotuberculosis serotype IB (strain PB1/+)).